Consider the following 416-residue polypeptide: MAKEGGRTAPCCSRPKVAALTVGTLLFLTGIGAASWAIVTILLRSDQEPLYQVQLSPGDSRLLVLDKTEGTWRLLCSSRSNARVAGLGCEEMGFLRALAHSELDVRTAGANGTSGFFCVDEGGLPLAQRLLDVISVCDCPRGRFLTATCQDCGRRKLPVDRIVGGQDSSLGRWPWQVSLRYDGTHLCGGSLLSGDWVLTAAHCFPERNRVLSRWRVFAGAVARTSPHAVQLGVQAVIYHGGYLPFRDPTIDENSNDIALVHLSSSLPLTEYIQPVCLPAAGQALVDGKVCTVTGWGNTQFYGQQAVVLQEARVPIISNEVCNSPDFYGNQIKPKMFCAGYPEGGIDACQGDSGGHFVCEDRISGTSRWRLCGIVSWGTGCALARKPGVYTKVIDFREWIFQAIKTHSEATGMVTQP.

Topologically, residues 1-18 are cytoplasmic; sequence MAKEGGRTAPCCSRPKVA. A helical; Signal-anchor for type II membrane protein transmembrane segment spans residues 19–39; that stretch reads ALTVGTLLFLTGIGAASWAIV. Topologically, residues 40–416 are extracellular; it reads TILLRSDQEP…SEATGMVTQP (377 aa). The 98-residue stretch at 53-150 folds into the SRCR domain; that stretch reads VQLSPGDSRL…RGRFLTATCQ (98 aa). Disulfide bonds link Cys76-Cys139, Cys89-Cys149, Cys118-Cys137, Cys152-Cys276, Cys187-Cys203, Cys290-Cys358, Cys321-Cys337, and Cys348-Cys380. Asn111 carries an N-linked (GlcNAc...) asparagine glycan. The 243-residue stretch at 162 to 404 folds into the Peptidase S1 domain; sequence IVGGQDSSLG…FREWIFQAIK (243 aa). Residues His202 and Asp256 each act as charge relay system in the active site. The Charge relay system role is filled by Ser352.

This sequence belongs to the peptidase S1 family. Widely expressed. Present in brain, heart, kidney, liver, stomach, muscle, lung, testis, skin and eye. Not expressed in ovary and thynus. In inner ear tissues, expressed in stria vascularis, modiolus, organ of Corti and spiral ganglion.

The protein localises to the cell membrane. Its subcellular location is the apical cell membrane. The catalysed reaction is Cleavage after basic amino-acid residues, with Arg strongly preferred to Lys.. Its function is as follows. Serine protease that cleaves extracellular substrates, and contributes to the proteolytic processing of growth factors, such as HGF and MST1/HGFL. Plays a role in cell growth and maintenance of cell morphology. Plays a role in the proteolytic processing of ACE2. Mediates the proteolytic cleavage of urinary UMOD that is required for UMOD polymerization. The sequence is that of Serine protease hepsin (Hpn) from Rattus norvegicus (Rat).